We begin with the raw amino-acid sequence, 209 residues long: Kynurenine formamidase (209 aa).

Residue tryptophan 20 participates in substrate binding. Residues histidine 50, histidine 54, and aspartate 56 each contribute to the Zn(2+) site. The active-site Proton donor/acceptor is the histidine 60. Residues histidine 161 and glutamate 173 each coordinate Zn(2+).

The protein belongs to the Cyclase 1 superfamily. KynB family. As to quaternary structure, homodimer. The cofactor is Zn(2+).

It catalyses the reaction N-formyl-L-kynurenine + H2O = L-kynurenine + formate + H(+). It functions in the pathway amino-acid degradation; L-tryptophan degradation via kynurenine pathway; L-kynurenine from L-tryptophan: step 2/2. Functionally, catalyzes the hydrolysis of N-formyl-L-kynurenine to L-kynurenine, the second step in the kynurenine pathway of tryptophan degradation. This chain is Kynurenine formamidase, found in Bacillus thuringiensis subsp. konkukian (strain 97-27).